Reading from the N-terminus, the 66-residue chain is MLAGIGFYRRFISPLIGPRCRFTPTCSAYGLEAIQRHGPWKGGWLTVKRLLRCHPFTPCGCDPVPD.

The protein belongs to the UPF0161 family.

It localises to the cell inner membrane. Its function is as follows. Could be involved in insertion of integral membrane proteins into the membrane. The polypeptide is Putative membrane protein insertion efficiency factor (Parasynechococcus marenigrum (strain WH8102)).